The following is a 233-amino-acid chain: Orotidine 5'-phosphate decarboxylase (233 aa).

Substrate-binding positions include aspartate 11, lysine 34, 61 to 70 (DLKLHDIPNT), threonine 117, arginine 179, glutamine 188, glycine 208, and arginine 209. Lysine 63 serves as the catalytic Proton donor.

Belongs to the OMP decarboxylase family. Type 1 subfamily. Homodimer.

It catalyses the reaction orotidine 5'-phosphate + H(+) = UMP + CO2. The protein operates within pyrimidine metabolism; UMP biosynthesis via de novo pathway; UMP from orotate: step 2/2. Catalyzes the decarboxylation of orotidine 5'-monophosphate (OMP) to uridine 5'-monophosphate (UMP). The sequence is that of Orotidine 5'-phosphate decarboxylase from Streptococcus pneumoniae serotype 4 (strain ATCC BAA-334 / TIGR4).